The following is a 402-amino-acid chain: Phosphopentomutase (402 aa).

The Mn(2+) site is built by aspartate 10, aspartate 301, histidine 306, aspartate 342, histidine 343, and histidine 354.

Belongs to the phosphopentomutase family. Mn(2+) is required as a cofactor.

It localises to the cytoplasm. It catalyses the reaction 2-deoxy-alpha-D-ribose 1-phosphate = 2-deoxy-D-ribose 5-phosphate. It carries out the reaction alpha-D-ribose 1-phosphate = D-ribose 5-phosphate. Its pathway is carbohydrate degradation; 2-deoxy-D-ribose 1-phosphate degradation; D-glyceraldehyde 3-phosphate and acetaldehyde from 2-deoxy-alpha-D-ribose 1-phosphate: step 1/2. Functionally, isomerase that catalyzes the conversion of deoxy-ribose 1-phosphate (dRib-1-P) and ribose 1-phosphate (Rib-1-P) to deoxy-ribose 5-phosphate (dRib-5-P) and ribose 5-phosphate (Rib-5-P), respectively. The protein is Phosphopentomutase of Aeromonas salmonicida (strain A449).